The following is a 376-amino-acid chain: NADPH oxidase organizer 1 (376 aa).

A PX domain is found at 1-131; that stretch reads MAGPRYPVSV…GFFAPQPLDL (131 aa). SH3 domains are found at residues 163–225 and 237–296; these read LEAQ…EAAP and SSGP…PEGL. The tract at residues 302–376 is disordered; the sequence is GTGFRGGDDP…DSVPHPTTEQ (75 aa). The span at 326-335 shows a compositional bias: pro residues; the sequence is APPPTVPTRP. The interval 328 to 337 is proline-rich region; mediates mutually exclusive interactions with itself and NOXA1; sequence PPTVPTRPSP.

In terms of assembly, interacts with NOX1, NOXA1, CYBA/p22phox and NCF2/p67phox. Interacts with SH3PXD2A and SH3PXD2B. As to expression, expressed in testis, small and large intestines, liver, kidney and pancreas. Isoform 3 is mainly expressed in colon. Isoform 1 is preferentially expressed in testis.

Its subcellular location is the cell membrane. In terms of biological role, constitutively potentiates the superoxide-generating activity of NOX1 and NOX3 and is required for the biogenesis of otoconia/otolith, which are crystalline structures of the inner ear involved in the perception of gravity. Isoform 3 is more potent than isoform 1 in activating NOX3. Together with NOXA1, may also substitute to NCF1/p47phox and NCF2/p67phox in supporting the phagocyte NOX2/gp91phox superoxide-generating activity. This Homo sapiens (Human) protein is NADPH oxidase organizer 1 (NOXO1).